Consider the following 415-residue polypeptide: Tyrosine--tRNA ligase (415 aa).

Tyrosine 40 provides a ligand contact to L-tyrosine. The 'HIGH' region signature appears at 45–54 (ATAKSLHVGS). Positions 178 and 182 each coordinate L-tyrosine. The 'KMSKS' region signature appears at 238-242 (KMGKS). Lysine 241 contributes to the ATP binding site. Residues 350 to 414 (ASIVQLIVKT…GKKRHALVQL (65 aa)) form the S4 RNA-binding domain.

The protein belongs to the class-I aminoacyl-tRNA synthetase family. TyrS type 1 subfamily. In terms of assembly, homodimer.

The protein localises to the cytoplasm. The enzyme catalyses tRNA(Tyr) + L-tyrosine + ATP = L-tyrosyl-tRNA(Tyr) + AMP + diphosphate + H(+). Functionally, catalyzes the attachment of tyrosine to tRNA(Tyr) in a two-step reaction: tyrosine is first activated by ATP to form Tyr-AMP and then transferred to the acceptor end of tRNA(Tyr). The polypeptide is Tyrosine--tRNA ligase (Ruegeria pomeroyi (strain ATCC 700808 / DSM 15171 / DSS-3) (Silicibacter pomeroyi)).